The chain runs to 356 residues: Protein RecA (356 aa).

67-74 (GPESSGKT) contributes to the ATP binding site.

It belongs to the RecA family.

Its subcellular location is the cytoplasm. Functionally, can catalyze the hydrolysis of ATP in the presence of single-stranded DNA, the ATP-dependent uptake of single-stranded DNA by duplex DNA, and the ATP-dependent hybridization of homologous single-stranded DNAs. It interacts with LexA causing its activation and leading to its autocatalytic cleavage. This Yersinia pestis bv. Antiqua (strain Angola) protein is Protein RecA.